The primary structure comprises 284 residues: MTSLKKIYSGKVRDLYEIDDQRMLMIATDRLSAFDVILDDPIPAKGQILTAISNFWFDKLKDVVPNHLTGDQPEDVVAAADLPQVEGRAVVAKRLKAVPIEAVVRGYLAGSGWKEYRQSGSVCGIALPAGLKEADKLPEPIFTPSTKAAVGDHDENISFAQCEAIVGAELAAKVRDTAILLYQTAAEYAATRGIIICDTKFEFGLDENGTLTLMDEALTPDSSRFWPADSYQPGSNPPSFDKQFVRDWLEASGWNKQAPAPAVPLDVREKTAAKYREALEKLAG.

The protein belongs to the SAICAR synthetase family.

The catalysed reaction is 5-amino-1-(5-phospho-D-ribosyl)imidazole-4-carboxylate + L-aspartate + ATP = (2S)-2-[5-amino-1-(5-phospho-beta-D-ribosyl)imidazole-4-carboxamido]succinate + ADP + phosphate + 2 H(+). It participates in purine metabolism; IMP biosynthesis via de novo pathway; 5-amino-1-(5-phospho-D-ribosyl)imidazole-4-carboxamide from 5-amino-1-(5-phospho-D-ribosyl)imidazole-4-carboxylate: step 1/2. The polypeptide is Phosphoribosylaminoimidazole-succinocarboxamide synthase (Chromobacterium violaceum (strain ATCC 12472 / DSM 30191 / JCM 1249 / CCUG 213 / NBRC 12614 / NCIMB 9131 / NCTC 9757 / MK)).